Consider the following 254-residue polypeptide: MTFKGFDKDFNITDKVAVVTGAASGIGKAMAELFSEKGAYVVLLDIKEDVKDVAAQINPSRTLALQVDITKKENIEKVVAEIKKVYPKIDILANSAGVALLEKAEDLPEEYWDKTMELNLKGSFLMAQIIGREMIATGGGKIVNMASQASVIALDKHVAYCASKAAIVSMTQVLAMEWAPYNINVNAISPTVILTELGKKAWAGQVGEDMKKLIPAGRFGYPEEVAACALFLVSDAASLITGENLIIDGGYTIK.

Residue 18–47 participates in NAD(+) binding; that stretch reads VVTGAASGIGKAMAELFSEKGAYVVLLDIK. Tyrosine 160 serves as the catalytic Proton acceptor. Lysine 164 is a binding site for NAD(+).

It belongs to the short-chain dehydrogenases/reductases (SDR) family. Mg(2+) is required as a cofactor. Requires Mn(2+) as cofactor.

The protein localises to the cytoplasm. The enzyme catalyses glycerol + NAD(+) = dihydroxyacetone + NADH + H(+). With respect to regulation, inhibited by Zn(2+). In terms of biological role, involved in the glycerol metabolism. Catalyzes the NAD-dependent oxidation of glycerol to dihydroxyacetone (glycerone). GolD specifically uses NAD. The sequence is that of NAD-dependent glycerol dehydrogenase from Listeria innocua serovar 6a (strain ATCC BAA-680 / CLIP 11262).